A 228-amino-acid polypeptide reads, in one-letter code: Ankyrin repeat domain-containing protein 46 (228 aa).

4 ANK repeats span residues 11 to 40 (QTSVPLLQACIDGDLSFARRLLETGCDPNI), 44 to 73 (RGRTGLHLAAARGNVDICRFLHKFGADLLA), 77 to 103 (QGNTALHLCGHVDTIQFLVSNGLKIDI), and 107 to 138 (NGSTPLVLAKRRGVNKDAIRLLEGLEEQEVKG). Residues 195–215 (VLLLLVVIALLSLGIAYYVSG) form a helical membrane-spanning segment.

Its subcellular location is the membrane. The polypeptide is Ankyrin repeat domain-containing protein 46 (ankrd46) (Danio rerio (Zebrafish)).